Reading from the N-terminus, the 444-residue chain is IMP-specific 5'-nucleotidase 1 (444 aa).

Residues lysine 132 and histidine 150 each contribute to the ATP site. Aspartate 170 acts as the Nucleophile in catalysis. IMP-binding residues include aspartate 170, aspartate 172, aspartate 178, threonine 204, serine 207, serine 308, aspartate 363, and lysine 371. Mg(2+) contacts are provided by aspartate 170 and aspartate 172. Aspartate 172 acts as the Proton donor in catalysis. Aspartate 394 is a binding site for Mg(2+).

The protein belongs to the ISN1 family. Homotetramer. Requires Mg(2+) as cofactor.

It localises to the cytoplasm. It carries out the reaction IMP + H2O = inosine + phosphate. At physiological pH, allosterically activated by ATP. ATP binding is a prerequisite to magnesium and substrate binding. ATP binds to 2 of the subunits in the homotetramer inducing a closure of these 2 subunits and the release of the C-terminal loop, thereby activating the enzyme. In this conformation, the enzyme can bind IMP and magnesium which ultimately leads to the release of ATP. At pH 5, ATP does not have an allosteric role and is dispensable for magnesium and substrate binding. Inhibited by phosphocholine and D-myo-inositol-4-phosphate. Specifically, catalyzes the dephosphorylation of inosine monophosphate (IMP) into inosine. By dephosphorylating IMP, plays a role in the purine salvage pathway. Does not have phosphotransferase activity with IMP as phosphate donor and adenosine as phosphate acceptor. In Plasmodium falciparum (isolate 3D7), this protein is IMP-specific 5'-nucleotidase 1.